The primary structure comprises 526 residues: Phosphoenolpyruvate carboxylase (526 aa).

The protein belongs to the PEPCase type 2 family. Homotetramer. It depends on Mg(2+) as a cofactor.

It catalyses the reaction oxaloacetate + phosphate = phosphoenolpyruvate + hydrogencarbonate. Catalyzes the irreversible beta-carboxylation of phosphoenolpyruvate (PEP) to form oxaloacetate (OAA), a four-carbon dicarboxylic acid source for the tricarboxylic acid cycle. The polypeptide is Phosphoenolpyruvate carboxylase (Methanosarcina acetivorans (strain ATCC 35395 / DSM 2834 / JCM 12185 / C2A)).